The chain runs to 591 residues: Pyruvate kinase 2 (591 aa).

Arginine 38 provides a ligand contact to substrate. The K(+) site is built by asparagine 40, serine 42, and aspartate 72. 40–43 contributes to the ATP binding site; it reads NFSH. Positions 79 and 164 each coordinate ATP. Glutamate 229 contributes to the Mg(2+) binding site. Residues glycine 252, aspartate 253, and threonine 285 each coordinate substrate. Aspartate 253 lines the Mg(2+) pocket.

The protein belongs to the pyruvate kinase family. In the C-terminal section; belongs to the PEP-utilizing enzyme family. Homotetramer. The cofactor is Mg(2+). It depends on K(+) as a cofactor.

The enzyme catalyses pyruvate + ATP = phosphoenolpyruvate + ADP + H(+). The protein operates within carbohydrate degradation; glycolysis; pyruvate from D-glyceraldehyde 3-phosphate: step 5/5. In Synechocystis sp. (strain ATCC 27184 / PCC 6803 / Kazusa), this protein is Pyruvate kinase 2 (pyk2).